The chain runs to 428 residues: Adenylosuccinate synthetase (428 aa).

GTP is bound by residues 12 to 18 (GDEGKGK) and 40 to 42 (GHT). Catalysis depends on Asp13, which acts as the Proton acceptor. Positions 13 and 40 each coordinate Mg(2+). IMP-binding positions include 13–16 (DEGK), 38–41 (NAGH), Thr133, Arg147, Asn224, Thr239, and Arg303. The active-site Proton donor is His41. 299–305 (TTTGRRR) is a substrate binding site. GTP-binding positions include Arg305, 331–333 (KLD), and 413–415 (GVG).

Belongs to the adenylosuccinate synthetase family. Homodimer. The cofactor is Mg(2+).

The protein localises to the cytoplasm. It carries out the reaction IMP + L-aspartate + GTP = N(6)-(1,2-dicarboxyethyl)-AMP + GDP + phosphate + 2 H(+). Its pathway is purine metabolism; AMP biosynthesis via de novo pathway; AMP from IMP: step 1/2. Its function is as follows. Plays an important role in the de novo pathway and in the salvage pathway of purine nucleotide biosynthesis. Catalyzes the first committed step in the biosynthesis of AMP from IMP. This is Adenylosuccinate synthetase from Coprinopsis cinerea (strain Okayama-7 / 130 / ATCC MYA-4618 / FGSC 9003) (Inky cap fungus).